The primary structure comprises 181 residues: Lipoprotein signal peptidase (181 aa).

3 consecutive transmembrane segments (helical) span residues L25 to I45, L86 to V106, and K107 to D127. Active-site residues include D138 and D153. The helical transmembrane segment at F149 to I169 threads the bilayer.

It belongs to the peptidase A8 family.

Its subcellular location is the cell membrane. It carries out the reaction Release of signal peptides from bacterial membrane prolipoproteins. Hydrolyzes -Xaa-Yaa-Zaa-|-(S,diacylglyceryl)Cys-, in which Xaa is hydrophobic (preferably Leu), and Yaa (Ala or Ser) and Zaa (Gly or Ala) have small, neutral side chains.. The protein operates within protein modification; lipoprotein biosynthesis (signal peptide cleavage). This protein specifically catalyzes the removal of signal peptides from prolipoproteins. This Mycoplasma genitalium (strain ATCC 33530 / DSM 19775 / NCTC 10195 / G37) (Mycoplasmoides genitalium) protein is Lipoprotein signal peptidase.